Reading from the N-terminus, the 368-residue chain is tRNA/tmRNA (uracil-C(5))-methyltransferase (368 aa).

Gln190, Tyr218, Asn223, Glu239, and Asp301 together coordinate S-adenosyl-L-methionine. Cys326 functions as the Nucleophile in the catalytic mechanism. The active-site Proton acceptor is the Glu360.

It belongs to the class I-like SAM-binding methyltransferase superfamily. RNA M5U methyltransferase family. TrmA subfamily.

The enzyme catalyses uridine(54) in tRNA + S-adenosyl-L-methionine = 5-methyluridine(54) in tRNA + S-adenosyl-L-homocysteine + H(+). It carries out the reaction uridine(341) in tmRNA + S-adenosyl-L-methionine = 5-methyluridine(341) in tmRNA + S-adenosyl-L-homocysteine + H(+). Dual-specificity methyltransferase that catalyzes the formation of 5-methyluridine at position 54 (m5U54) in all tRNAs, and that of position 341 (m5U341) in tmRNA (transfer-mRNA). The chain is tRNA/tmRNA (uracil-C(5))-methyltransferase from Aliivibrio salmonicida (strain LFI1238) (Vibrio salmonicida (strain LFI1238)).